A 125-amino-acid chain; its full sequence is Holo-[acyl-carrier-protein] synthase (125 aa).

Aspartate 8 and glutamate 57 together coordinate Mg(2+).

Belongs to the P-Pant transferase superfamily. AcpS family. It depends on Mg(2+) as a cofactor.

It is found in the cytoplasm. It catalyses the reaction apo-[ACP] + CoA = holo-[ACP] + adenosine 3',5'-bisphosphate + H(+). Functionally, transfers the 4'-phosphopantetheine moiety from coenzyme A to a Ser of acyl-carrier-protein. This is Holo-[acyl-carrier-protein] synthase from Azoarcus sp. (strain BH72).